The chain runs to 571 residues: uncharacterized protein (571 aa).

This is an uncharacterized protein from Methanocaldococcus jannaschii (strain ATCC 43067 / DSM 2661 / JAL-1 / JCM 10045 / NBRC 100440) (Methanococcus jannaschii).